The following is a 358-amino-acid chain: uncharacterized protein (358 aa).

Positions 39, 61, 92, 95, 98, 106, and 157 each coordinate Zn(2+).

Belongs to the zinc-containing alcohol dehydrogenase family. Requires Zn(2+) as cofactor.

This is an uncharacterized protein from Escherichia coli (strain K12).